Here is a 310-residue protein sequence, read N- to C-terminus: Ribosomal RNA small subunit methyltransferase H (310 aa).

S-adenosyl-L-methionine is bound by residues 32-34 (AGH), D51, F78, D99, and Q106.

This sequence belongs to the methyltransferase superfamily. RsmH family.

It localises to the cytoplasm. The catalysed reaction is cytidine(1402) in 16S rRNA + S-adenosyl-L-methionine = N(4)-methylcytidine(1402) in 16S rRNA + S-adenosyl-L-homocysteine + H(+). Its function is as follows. Specifically methylates the N4 position of cytidine in position 1402 (C1402) of 16S rRNA. The protein is Ribosomal RNA small subunit methyltransferase H of Macrococcus caseolyticus (strain JCSC5402) (Macrococcoides caseolyticum).